The primary structure comprises 544 residues: NADH-quinone oxidoreductase subunit C/D (544 aa).

The segment at 1–138 (MLNCDMLIDS…KGQICTETED (138 aa)) is NADH dehydrogenase I subunit C. The tract at residues 161–544 (MLLNVGPSHP…MNFIAGEFDR (384 aa)) is NADH dehydrogenase I subunit D.

The protein in the N-terminal section; belongs to the complex I 30 kDa subunit family. In the C-terminal section; belongs to the complex I 49 kDa subunit family. NDH-1 is composed of 13 different subunits. Subunits NuoB, CD, E, F, and G constitute the peripheral sector of the complex.

It is found in the cell inner membrane. It catalyses the reaction a quinone + NADH + 5 H(+)(in) = a quinol + NAD(+) + 4 H(+)(out). NDH-1 shuttles electrons from NADH, via FMN and iron-sulfur (Fe-S) centers, to quinones in the respiratory chain. The immediate electron acceptor for the enzyme in this species is believed to be ubiquinone. Couples the redox reaction to proton translocation (for every two electrons transferred, four hydrogen ions are translocated across the cytoplasmic membrane), and thus conserves the redox energy in a proton gradient. This Aliarcobacter butzleri (strain RM4018) (Arcobacter butzleri) protein is NADH-quinone oxidoreductase subunit C/D.